The chain runs to 113 residues: Single-stranded DNA-binding protein B (113 aa).

An SSB domain is found at 1 to 104; sequence MFNQVMLVGR…VLADTVRFMD (104 aa). Y82 carries the post-translational modification Phosphotyrosine.

In terms of assembly, homotetramer. In terms of processing, phosphorylated by YwqD, which increases ssDNA affinity; dephosphorylated by YwqE.

Its subcellular location is the cytoplasm. Its function is as follows. Not essential for replication of the chromosome, but is required for optimal competence. Binds ssDNA, binding is facilitated by DprA, acts as an accessory factor for homologous DNA strand exchange. The polypeptide is Single-stranded DNA-binding protein B (ssbB) (Bacillus subtilis (strain 168)).